Here is a 462-residue protein sequence, read N- to C-terminus: Polygalacturonase (462 aa).

Residues methionine 1 to threonine 22 form the signal peptide. N-linked (GlcNAc...) asparagine glycosylation occurs at asparagine 173. Aspartate 278 serves as the catalytic Proton donor. A disulfide bridge connects residues cysteine 280 and cysteine 297. Asparagine 294 carries N-linked (GlcNAc...) asparagine glycosylation. Residue histidine 301 is part of the active site. N-linked (GlcNAc...) asparagine glycosylation is present at asparagine 358. 2 disulfide bridges follow: cysteine 407–cysteine 413 and cysteine 435–cysteine 460.

It belongs to the glycosyl hydrolase 28 family.

It localises to the secreted. It is found in the cell wall. It carries out the reaction (1,4-alpha-D-galacturonosyl)n+m + H2O = (1,4-alpha-D-galacturonosyl)n + (1,4-alpha-D-galacturonosyl)m.. Acts in concert with the pectinesterase, in the ripening process. Is involved in cell wall metabolism, specifically in polyuronide degradation. This is Polygalacturonase from Persea americana (Avocado).